An 85-amino-acid polypeptide reads, in one-letter code: Contulakin-Lt1 (85 aa).

Residues 1 to 22 (MRTAYWVMVMMMVGITAPLSEG) form the signal peptide. The propeptide occupies 23-60 (RKLNDAIRGLVADYLTPQLLQSLVSAPYPEFQLDDPNL). Cys-65 and Cys-70 are joined by a disulfide. The propeptide occupies 76 to 85 (RRRDLKKRNK).

This sequence belongs to the conotoxin C superfamily. Expressed by the venom duct.

It localises to the secreted. Functionally, acts as an agonist of neurotensin receptors. It binds to human neurotensin type 1 receptor (NTSR1), rat neurotensin types 1 and 2 receptors (NTSR1/NTSR2) and mouse neurotensin type 3 receptor (SORT1). The polypeptide is Contulakin-Lt1 (Conus litteratus (Lettered cone)).